The sequence spans 127 residues: Ribosome-binding factor A (127 aa).

This sequence belongs to the RbfA family. Monomer. Binds 30S ribosomal subunits, but not 50S ribosomal subunits or 70S ribosomes.

The protein resides in the cytoplasm. One of several proteins that assist in the late maturation steps of the functional core of the 30S ribosomal subunit. Associates with free 30S ribosomal subunits (but not with 30S subunits that are part of 70S ribosomes or polysomes). Required for efficient processing of 16S rRNA. May interact with the 5'-terminal helix region of 16S rRNA. The chain is Ribosome-binding factor A from Chloroflexus aurantiacus (strain ATCC 29366 / DSM 635 / J-10-fl).